The primary structure comprises 314 residues: Acetylglutamate kinase (314 aa).

Residues 76-77 (GG), Arg98, and Asn199 each bind substrate.

Belongs to the acetylglutamate kinase family. ArgB subfamily.

The protein resides in the cytoplasm. It catalyses the reaction N-acetyl-L-glutamate + ATP = N-acetyl-L-glutamyl 5-phosphate + ADP. It participates in amino-acid biosynthesis; L-arginine biosynthesis; N(2)-acetyl-L-ornithine from L-glutamate: step 2/4. Functionally, catalyzes the ATP-dependent phosphorylation of N-acetyl-L-glutamate. The sequence is that of Acetylglutamate kinase from Bifidobacterium longum (strain DJO10A).